The sequence spans 371 residues: UDP-N-acetylglucosamine--N-acetylmuramyl-(pentapeptide) pyrophosphoryl-undecaprenol N-acetylglucosamine transferase (371 aa).

UDP-N-acetyl-alpha-D-glucosamine-binding positions include 10–12 (TGG), N124, R165, S191, I246, and Q291.

This sequence belongs to the glycosyltransferase 28 family. MurG subfamily.

It is found in the cell inner membrane. The catalysed reaction is di-trans,octa-cis-undecaprenyl diphospho-N-acetyl-alpha-D-muramoyl-L-alanyl-D-glutamyl-meso-2,6-diaminopimeloyl-D-alanyl-D-alanine + UDP-N-acetyl-alpha-D-glucosamine = di-trans,octa-cis-undecaprenyl diphospho-[N-acetyl-alpha-D-glucosaminyl-(1-&gt;4)]-N-acetyl-alpha-D-muramoyl-L-alanyl-D-glutamyl-meso-2,6-diaminopimeloyl-D-alanyl-D-alanine + UDP + H(+). The protein operates within cell wall biogenesis; peptidoglycan biosynthesis. Cell wall formation. Catalyzes the transfer of a GlcNAc subunit on undecaprenyl-pyrophosphoryl-MurNAc-pentapeptide (lipid intermediate I) to form undecaprenyl-pyrophosphoryl-MurNAc-(pentapeptide)GlcNAc (lipid intermediate II). This Geobacter sp. (strain M21) protein is UDP-N-acetylglucosamine--N-acetylmuramyl-(pentapeptide) pyrophosphoryl-undecaprenol N-acetylglucosamine transferase.